The primary structure comprises 516 residues: L-amino acid oxidase bordonein-L (516 aa).

Residues methionine 1–cysteine 18 form the signal peptide. A disulfide bridge connects residues cysteine 28 and cysteine 189. Residues methionine 61 to alanine 62, glutamate 81 to alanine 82, arginine 89, and glycine 103 to arginine 106 contribute to the FAD site. Residues arginine 106 and histidine 239 each contribute to the substrate site. FAD is bound at residue valine 279. A disulfide bond links cysteine 349 and cysteine 430. Residue asparagine 379 is glycosylated (N-linked (GlcNAc...) asparagine). Residue tyrosine 390 participates in substrate binding. FAD contacts are provided by residues glutamate 475 and glycine 482–threonine 487. Glycine 482–tryptophan 483 serves as a coordination point for substrate.

In terms of assembly, homodimer; non-covalently linked. The cofactor is FAD. Post-translationally, N-glycosylated. N-glycan probably consists of the disaccharide N-acetylglucosamine-fucose (HexNAc-Fuc). Expressed by the venom gland.

The protein resides in the secreted. The enzyme catalyses an L-alpha-amino acid + O2 + H2O = a 2-oxocarboxylate + H2O2 + NH4(+). It carries out the reaction L-leucine + O2 + H2O = 4-methyl-2-oxopentanoate + H2O2 + NH4(+). The catalysed reaction is L-phenylalanine + O2 + H2O = 3-phenylpyruvate + H2O2 + NH4(+). It catalyses the reaction L-tryptophan + O2 + H2O = indole-3-pyruvate + H2O2 + NH4(+). The enzyme catalyses L-methionine + O2 + H2O = 4-methylsulfanyl-2-oxobutanoate + H2O2 + NH4(+). It carries out the reaction L-isoleucine + O2 + H2O = (S)-3-methyl-2-oxopentanoate + H2O2 + NH4(+). The catalysed reaction is L-arginine + O2 + H2O = 5-guanidino-2-oxopentanoate + H2O2 + NH4(+). It catalyses the reaction L-histidine + O2 + H2O = 3-(imidazol-5-yl)pyruvate + H2O2 + NH4(+). In terms of biological role, catalyzes an oxidative deamination of predominantly hydrophobic and aromatic L-amino acids, thus producing hydrogen peroxide that may contribute to the diverse toxic effects of this enzyme. Is highly active on L-Met, L-Leu, L-Trp, and L-Phe, moderately active on L-Ile, L-His, and L-Arg, and weakly or not active on L-Gln, L-Val, L-Asn, L-Ala, L-Lys, L-Ser, L-Thr, L-Pro, L-Asp, L-Gly, L-Tyr, L-Cys and L-Glu. This enzyme exhibits diverse biological activities, such as hemorrhage, hemolysis, edema, apoptosis of vascular endothelial cells or tumor cell lines, antibacterial and antiparasitic activities, as well as regulation of platelet aggregation. Its effect on platelets is controversial, since it either induces aggregation or inhibits agonist-induced aggregation. These different effects are probably due to different experimental conditions. In vitro, the enzyme exhibits cytotoxicity against fibroblast cell line and kills Leishmania amazonensis promastigotes, intensified by substrate addition. This chain is L-amino acid oxidase bordonein-L, found in Crotalus durissus terrificus (South American rattlesnake).